The following is a 1040-amino-acid chain: Eukaryotic translation initiation factor 3 subunit A (1040 aa).

The stretch at 92-121 forms a coiled coil; the sequence is LKKFIELAEKKVTEAQTKADEIQSSLESAA. The region spanning 339–523 is the PCI domain; sequence MTKAASFVLL…GVLTFDSDVF (185 aa). Positions 608–906 form a coiled coil; sequence RVIIEKKKEA…AEARRAARKA (299 aa). Composition is skewed to basic and acidic residues over residues 617–632 and 795–901; these read AATD…EETR and EVSE…EARR. 2 disordered regions span residues 617–641 and 795–1040; these read AATD…QQLQ and EVSE…QQNQ. 4 stretches are compositionally biased toward low complexity: residues 908-917, 945-955, 978-993, and 1004-1018; these read LEPAAPAARP, KEAAGGAAPEA, SGSS…NGAP, and SSSS…TPGS.

Belongs to the eIF-3 subunit A family. Component of the eukaryotic translation initiation factor 3 (eIF-3) complex.

It localises to the cytoplasm. Functionally, RNA-binding component of the eukaryotic translation initiation factor 3 (eIF-3) complex, which is involved in protein synthesis of a specialized repertoire of mRNAs and, together with other initiation factors, stimulates binding of mRNA and methionyl-tRNAi to the 40S ribosome. The eIF-3 complex specifically targets and initiates translation of a subset of mRNAs involved in cell proliferation. The chain is Eukaryotic translation initiation factor 3 subunit A (tif32) from Aspergillus terreus (strain NIH 2624 / FGSC A1156).